Consider the following 141-residue polypeptide: Cholinesterase (141 aa).

Asn-39 carries an N-linked (GlcNAc...) asparagine glycan. 49-50 (GS) contributes to the substrate binding site. Ser-131 serves as the catalytic Acyl-ester intermediate. Ser-131 carries the phosphoserine modification.

Belongs to the type-B carboxylesterase/lipase family. Homotetramer; disulfide-linked. Dimer of dimers. Present in most cells except erythrocytes.

The protein resides in the secreted. The enzyme catalyses an acylcholine + H2O = a carboxylate + choline + H(+). Functionally, esterase with broad substrate specificity. Contributes to the inactivation of the neurotransmitter acetylcholine. Can degrade neurotoxic organophosphate esters. The polypeptide is Cholinesterase (BCHE) (Ovis aries (Sheep)).